The chain runs to 536 residues: Phosphoenolpyruvate carboxykinase (ATP) (536 aa).

Positions 61, 195, and 201 each coordinate substrate. ATP contacts are provided by residues Lys201, His220, and 236 to 244 (GLSGTGKTT). Mn(2+) is bound by residues Lys201 and His220. Residue Asp257 coordinates Mn(2+). Glu285, Arg322, and Thr447 together coordinate ATP. Substrate is bound at residue Arg322.

Belongs to the phosphoenolpyruvate carboxykinase (ATP) family. Requires Mn(2+) as cofactor.

The protein resides in the cytoplasm. The catalysed reaction is oxaloacetate + ATP = phosphoenolpyruvate + ADP + CO2. It participates in carbohydrate biosynthesis; gluconeogenesis. Its function is as follows. Involved in the gluconeogenesis. Catalyzes the conversion of oxaloacetate (OAA) to phosphoenolpyruvate (PEP) through direct phosphoryl transfer between the nucleoside triphosphate and OAA. This chain is Phosphoenolpyruvate carboxykinase (ATP), found in Sinorhizobium medicae (strain WSM419) (Ensifer medicae).